Here is a 619-residue protein sequence, read N- to C-terminus: Dihydroxy-acid dehydratase (619 aa).

Position 81 (aspartate 81) interacts with Mg(2+). Cysteine 122 provides a ligand contact to [2Fe-2S] cluster. Residues aspartate 123 and lysine 124 each coordinate Mg(2+). Position 124 is an N6-carboxylysine (lysine 124). Cysteine 195 is a binding site for [2Fe-2S] cluster. A Mg(2+)-binding site is contributed by glutamate 494. Serine 520 serves as the catalytic Proton acceptor.

This sequence belongs to the IlvD/Edd family. As to quaternary structure, homodimer. It depends on [2Fe-2S] cluster as a cofactor. Mg(2+) is required as a cofactor.

The catalysed reaction is (2R)-2,3-dihydroxy-3-methylbutanoate = 3-methyl-2-oxobutanoate + H2O. The enzyme catalyses (2R,3R)-2,3-dihydroxy-3-methylpentanoate = (S)-3-methyl-2-oxopentanoate + H2O. It participates in amino-acid biosynthesis; L-isoleucine biosynthesis; L-isoleucine from 2-oxobutanoate: step 3/4. Its pathway is amino-acid biosynthesis; L-valine biosynthesis; L-valine from pyruvate: step 3/4. Functions in the biosynthesis of branched-chain amino acids. Catalyzes the dehydration of (2R,3R)-2,3-dihydroxy-3-methylpentanoate (2,3-dihydroxy-3-methylvalerate) into 2-oxo-3-methylpentanoate (2-oxo-3-methylvalerate) and of (2R)-2,3-dihydroxy-3-methylbutanoate (2,3-dihydroxyisovalerate) into 2-oxo-3-methylbutanoate (2-oxoisovalerate), the penultimate precursor to L-isoleucine and L-valine, respectively. The sequence is that of Dihydroxy-acid dehydratase from Shewanella denitrificans (strain OS217 / ATCC BAA-1090 / DSM 15013).